The sequence spans 316 residues: Bifunctional peptidase and (3S)-lysyl hydroxylase JMJD7 (316 aa).

Cysteine sulfenic acid (-SOH) is present on C19. 2 residues coordinate 2-oxoglutarate: Y123 and T172. Succinate is bound at residue Y123. Residues 124–310 (IQKQNSNLSV…YCYYRMLEQM (187 aa)) form the JmjC domain. H175 and D177 together coordinate Fe cation. 2-oxoglutarate contacts are provided by N181, Y183, and K190. Succinate contacts are provided by Y183 and K190. H278 contributes to the Fe cation binding site. W292 is a 2-oxoglutarate binding site.

As to quaternary structure, homodimer; disulfide-linked. It depends on Fe(2+) as a cofactor. As to expression, expressed in the pars intercerebralis and fan-shaped body, regions known to be involved in sleep.

It is found in the nucleus. The protein resides in the cytoplasm. The catalysed reaction is L-lysyl-[protein] + 2-oxoglutarate + O2 = (3S)-3-hydroxy-L-lysyl-[protein] + succinate + CO2. Its function is as follows. Bifunctional enzyme that acts both as an endopeptidase and 2-oxoglutarate-dependent monooxygenase. Endopeptidase that cleaves histones N-terminal tails at the carboxyl side of methylated arginine or lysine residues, to generate 'tailless nucleosomes', which may trigger transcription elongation. Hydroxylates the guanylate binding protein 128up. May be involved in regulation of behavior and circadian rhythms. The protein is Bifunctional peptidase and (3S)-lysyl hydroxylase JMJD7 of Drosophila melanogaster (Fruit fly).